Here is a 345-residue protein sequence, read N- to C-terminus: Telomere-binding protein cav (345 aa).

A required for binding to Su(var)205 region spans residues Arg115 to Glu337. 2 disordered regions span residues Arg145–Gln180 and Pro200–Pro231. Short sequence motifs (su(var)205-binding Pro-containing repeat) lie at residues Pro231–Glu237 and Pro298–Glu304.

As to quaternary structure, component of the HipHop-HOAP telomere capping complex, composed of at least HipHop and cav/HOAP, and may include Su(var)205/HP1; HipHop and cav/HOAP, but not Su(var)205, are interdependent for their protein stability. Interacts with HipHop (via N-terminus). Interacts (via C-terminus) with Su(var)205/HP1 dimer (via hinge and chromoshadow domain) and Orc1; possibly interacts with other components of the origin recognition complex (ORC). Each molecule of cav/HOAP interacts with 2 molecules of Su(var)205/HP1. The HipHop-HOAP complex recruits the MTV complex, consisting of moi/modigliani, tea and ver/verrocchio, to telomeres, forming the terminin telomere-capping complex. Interacts with moi/modigliani; the interaction is direct. Interacts with ver/verrochio; the interaction is direct. Interacts with HP6, which is also part of the terminin complex. Interacts (via N-terminus) with peo/pendolino (via N-terminus); the interaction is direct.

It is found in the nucleus. The protein resides in the chromosome. The protein localises to the telomere. In terms of biological role, part of the HipHop-HOAP complex that recruits the MTV complex to form the terminin telomere-capping complex, which binds to chromosome ends in a sequence-independent manner and prevents telomere fusion. Telomere capping is independent of the origin recognition complex (ORC). The chain is Telomere-binding protein cav from Drosophila melanogaster (Fruit fly).